The primary structure comprises 231 residues: Large ribosomal subunit protein uL1 (231 aa).

The protein belongs to the universal ribosomal protein uL1 family. As to quaternary structure, part of the 50S ribosomal subunit.

In terms of biological role, binds directly to 23S rRNA. The L1 stalk is quite mobile in the ribosome, and is involved in E site tRNA release. Functionally, protein L1 is also a translational repressor protein, it controls the translation of the L11 operon by binding to its mRNA. In Acinetobacter baylyi (strain ATCC 33305 / BD413 / ADP1), this protein is Large ribosomal subunit protein uL1.